The chain runs to 72 residues: Rubredoxin in uptake hydrogenase operon (72 aa).

In terms of domain architecture, Rubredoxin-like spans 19–70 (DAVLECKICWHRYDPAVGDEVWQILAGTPFAALPAHWRCPQCDGDREQFMVV). Positions 24, 27, 57, and 60 each coordinate Fe cation.

The protein belongs to the rubredoxin family. It depends on Fe(3+) as a cofactor.

In terms of biological role, could be an electron transport intermediate in hydrogen oxidation. The polypeptide is Rubredoxin in uptake hydrogenase operon (hupR) (Azotobacter chroococcum mcd 1).